The primary structure comprises 284 residues: MTSFQFTKMHGLGNNYIYVNQMKEQLPEEKLSEIAIQVSSIYTGIGSDGMILICPSDVAPVKMRIFNNDGSEGKNCGNGLRCVAKYVYEHQIVTDTTFQIETLSGLVEATVHVQDDHVHLVTVDMGKPRFEKEAMPMLGEPASTTINEPLDFGTTTLNGTAVSMGNPHIVFYLEDIEKAPLDTLGPIIEKHDMFPEGVNVEFVEVVSETELHFRVWERGSGITQACGTGACAAAVSTIVNGQAKKETDMTVHLAGGDLIIRWKDNEHVLMTGPAETICDGTFYL.

Positions 14 and 67 each coordinate substrate. The active-site Proton donor is the cysteine 76. Residues 77 to 78 (GN), asparagine 166, asparagine 199, and 217 to 218 (ER) contribute to the substrate site. The active-site Proton acceptor is the cysteine 226. 227–228 (GT) contacts substrate.

It belongs to the diaminopimelate epimerase family. Homodimer.

It localises to the cytoplasm. It catalyses the reaction (2S,6S)-2,6-diaminopimelate = meso-2,6-diaminopimelate. Its pathway is amino-acid biosynthesis; L-lysine biosynthesis via DAP pathway; DL-2,6-diaminopimelate from LL-2,6-diaminopimelate: step 1/1. In terms of biological role, catalyzes the stereoinversion of LL-2,6-diaminopimelate (L,L-DAP) to meso-diaminopimelate (meso-DAP), a precursor of L-lysine and an essential component of the bacterial peptidoglycan. This chain is Diaminopimelate epimerase, found in Bacillus pumilus (strain SAFR-032).